The following is a 94-amino-acid chain: Conotoxin Qc6.1 (94 aa).

A signal peptide spans 1-22 (MKLTCMMIVALLFLTAWTFVTA). A propeptide spanning residues 23–62 (VDSKNELENRGGWGQAGGWGKLFPMARDEMKNSEVSKLDN) is cleaved from the precursor. Disulfide bonds link cysteine 66–cysteine 84, cysteine 73–cysteine 88, and cysteine 83–cysteine 92.

This sequence belongs to the conotoxin O1 superfamily. Expressed by the venom duct.

It localises to the secreted. In Conus quercinus (Oak cone), this protein is Conotoxin Qc6.1.